We begin with the raw amino-acid sequence, 591 residues long: Phosphoglucan phosphatase LSF1, chloroplastic (591 aa).

The N-terminal 61 residues, 1–61, are a transit peptide targeting the chloroplast; the sequence is MAFLQQISGL…RRRRVVLRVV (61 aa). In terms of domain architecture, Tyrosine-protein phosphatase spans 291 to 453; the sequence is RYSKITEQIY…VDDGKHDGTP (163 aa). Residue Cys390 is the Phosphocysteine intermediate of the active site. 390 to 396 contacts substrate; it reads CTTGFDR.

The protein resides in the plastid. The protein localises to the chloroplast. Functionally, starch granule-associated phosphoglucan phosphatase involved in the control of starch accumulation. Participates in the regulation of the initial steps of starch degradation at the granule surface. May release a different set of phosphate groups from those removed by DSP4. In Arabidopsis thaliana (Mouse-ear cress), this protein is Phosphoglucan phosphatase LSF1, chloroplastic (LSF1).